A 99-amino-acid chain; its full sequence is Aspartyl/glutamyl-tRNA(Asn/Gln) amidotransferase subunit C (99 aa).

This sequence belongs to the GatC family. As to quaternary structure, heterotrimer of A, B and C subunits.

It carries out the reaction L-glutamyl-tRNA(Gln) + L-glutamine + ATP + H2O = L-glutaminyl-tRNA(Gln) + L-glutamate + ADP + phosphate + H(+). The enzyme catalyses L-aspartyl-tRNA(Asn) + L-glutamine + ATP + H2O = L-asparaginyl-tRNA(Asn) + L-glutamate + ADP + phosphate + 2 H(+). Functionally, allows the formation of correctly charged Asn-tRNA(Asn) or Gln-tRNA(Gln) through the transamidation of misacylated Asp-tRNA(Asn) or Glu-tRNA(Gln) in organisms which lack either or both of asparaginyl-tRNA or glutaminyl-tRNA synthetases. The reaction takes place in the presence of glutamine and ATP through an activated phospho-Asp-tRNA(Asn) or phospho-Glu-tRNA(Gln). The chain is Aspartyl/glutamyl-tRNA(Asn/Gln) amidotransferase subunit C from Macrococcus caseolyticus (strain JCSC5402) (Macrococcoides caseolyticum).